A 489-amino-acid polypeptide reads, in one-letter code: UDP-N-acetylmuramate--L-alanine ligase (489 aa).

128 to 134 (GTHGKTT) serves as a coordination point for ATP.

Belongs to the MurCDEF family.

The protein localises to the cytoplasm. The enzyme catalyses UDP-N-acetyl-alpha-D-muramate + L-alanine + ATP = UDP-N-acetyl-alpha-D-muramoyl-L-alanine + ADP + phosphate + H(+). The protein operates within cell wall biogenesis; peptidoglycan biosynthesis. In terms of biological role, cell wall formation. The protein is UDP-N-acetylmuramate--L-alanine ligase of Shewanella halifaxensis (strain HAW-EB4).